The primary structure comprises 498 residues: ATP synthase subunit beta, chloroplastic (498 aa).

ATP is bound at residue G172–T179.

The protein belongs to the ATPase alpha/beta chains family. As to quaternary structure, F-type ATPases have 2 components, CF(1) - the catalytic core - and CF(0) - the membrane proton channel. CF(1) has five subunits: alpha(3), beta(3), gamma(1), delta(1), epsilon(1). CF(0) has four main subunits: a(1), b(1), b'(1) and c(9-12).

The protein resides in the plastid. Its subcellular location is the chloroplast thylakoid membrane. It catalyses the reaction ATP + H2O + 4 H(+)(in) = ADP + phosphate + 5 H(+)(out). In terms of biological role, produces ATP from ADP in the presence of a proton gradient across the membrane. The catalytic sites are hosted primarily by the beta subunits. The protein is ATP synthase subunit beta, chloroplastic of Beta vulgaris (Sugar beet).